The sequence spans 446 residues: Glycerol-3-phosphate acyltransferase 3 (446 aa).

Helical transmembrane passes span Ile-11–Ser-31, Leu-146–Leu-166, and Ile-168–Leu-188. Positions His-236–Asp-241 match the HXXXXD motif motif.

This sequence belongs to the 1-acyl-sn-glycerol-3-phosphate acyltransferase family.

It is found in the endoplasmic reticulum membrane. It carries out the reaction sn-glycerol 3-phosphate + an acyl-CoA = a 1-acyl-sn-glycero-3-phosphate + CoA. The enzyme catalyses a 1-acyl-sn-glycero-3-phosphate + an acyl-CoA = a 1,2-diacyl-sn-glycero-3-phosphate + CoA. It catalyses the reaction dodecanoyl-CoA + sn-glycerol 3-phosphate = 1-dodecanoyl-sn-glycerol 3-phosphate + CoA. The catalysed reaction is sn-glycerol 3-phosphate + hexadecanoyl-CoA = 1-hexadecanoyl-sn-glycero-3-phosphate + CoA. It carries out the reaction sn-glycerol 3-phosphate + (9Z)-octadecenoyl-CoA = 1-(9Z-octadecenoyl)-sn-glycero-3-phosphate + CoA. The enzyme catalyses (9Z,12Z)-octadecadienoyl-CoA + sn-glycerol 3-phosphate = 1-(9Z,12Z)-octadecadienoyl-sn-glycero-3-phosphate + CoA. It catalyses the reaction 1-tetradecanoyl-sn-glycerol 3-phosphate + (9Z)-octadecenoyl-CoA = 1-tetradecanoyl-2-(9Z)-octadecenoyl-sn-glycero-3-phosphate + CoA. The catalysed reaction is 1-hexadecanoyl-sn-glycero-3-phosphate + (9Z)-octadecenoyl-CoA = 1-hexadecanoyl-2-(9Z-octadecenoyl)-sn-glycero-3-phosphate + CoA. It carries out the reaction 1-(9Z-octadecenoyl)-sn-glycero-3-phosphate + (9Z)-octadecenoyl-CoA = 1,2-di-(9Z-octadecenoyl)-sn-glycero-3-phosphate + CoA. The enzyme catalyses 1-(6Z,9Z,12Z-octadecatrienoyl)-sn-glycero-3-phosphate + (9Z)-octadecenoyl-CoA = (6Z,9Z,12Z)-octadecatrienoyl-2-(9Z)-octadecenoyl-sn-glycero-3-phosphate + CoA. It catalyses the reaction 1-(9Z,12Z,15Z)-octadecatrienoyl-sn-glycero-3-phosphate + (9Z)-octadecenoyl-CoA = 1-(9Z,12Z,15Z)-octadecatrienoyl-2-(9Z)-octadecenoyl-sn-glycero-3-phosphate + CoA. The catalysed reaction is 1-(9Z-octadecenoyl)-sn-glycero-3-phosphate + tetradecanoyl-CoA = 1-(9Z)-octadecenoyl-2-tetradecanoyl-sn-glycero-3-phosphate + CoA. It carries out the reaction 1-(9Z-octadecenoyl)-sn-glycero-3-phosphate + hexadecanoyl-CoA = 1-(9Z)-octadecenoyl-2-hexadecanoyl-sn-glycero-3-phosphate + CoA. The enzyme catalyses 1-(9Z-octadecenoyl)-sn-glycero-3-phosphate + octadecanoyl-CoA = 1-(9Z-octadecenoyl)-2-octadecanoyl-sn-glycero-3-phosphate + CoA. It catalyses the reaction 1-(9Z-octadecenoyl)-sn-glycero-3-phosphate + (9Z,12Z)-octadecadienoyl-CoA = 1-(9Z)-octadecenoyl-2-(9Z,12Z)-octadecadienoyl-sn-glycero-3-phosphate + CoA. The catalysed reaction is 1-(5Z,8Z,11Z,14Z-eicosatetraenoyl)-sn-glycero-3-phosphate + (9Z)-octadecenoyl-CoA = 1-(5Z,8Z,11Z,14Z)-eicosatetraenoyl-2-(9Z)-octadecenoyl-sn-glycero-3-phosphate + CoA. Its pathway is glycerolipid metabolism; triacylglycerol biosynthesis. The protein operates within phospholipid metabolism; CDP-diacylglycerol biosynthesis; CDP-diacylglycerol from sn-glycerol 3-phosphate: step 1/3. Functionally, converts glycerol-3-phosphate to 1-acyl-sn-glycerol-3-phosphate (lysophosphatidic acid or LPA) by incorporating an acyl moiety at the sn-1 position of the glycerol backbone. Also converts LPA into 1,2-diacyl-sn-glycerol-3-phosphate (phosphatidic acid or PA) by incorporating an acyl moiety at the sn-2 position of the glycerol backbone. Protects cells against lipotoxicity. The protein is Glycerol-3-phosphate acyltransferase 3 of Xenopus laevis (African clawed frog).